The following is a 262-amino-acid chain: Malonyl-[acyl-carrier protein] O-methyltransferase (262 aa).

This sequence belongs to the methyltransferase superfamily.

It carries out the reaction malonyl-[ACP] + S-adenosyl-L-methionine = malonyl-[ACP] methyl ester + S-adenosyl-L-homocysteine. It participates in cofactor biosynthesis; biotin biosynthesis. Functionally, converts the free carboxyl group of a malonyl-thioester to its methyl ester by transfer of a methyl group from S-adenosyl-L-methionine (SAM). It allows to synthesize pimeloyl-ACP via the fatty acid synthetic pathway. In Dechloromonas aromatica (strain RCB), this protein is Malonyl-[acyl-carrier protein] O-methyltransferase.